The primary structure comprises 542 residues: CTP synthase (542 aa).

The tract at residues 1–265 is amidoligase domain; sequence MARYVFITGG…DDEVLAAFGI (265 aa). Ser-13 provides a ligand contact to CTP. Ser-13 is a binding site for UTP. Residues 14-19 and Asp-71 contribute to the ATP site; that span reads SLGKGI. Asp-71 and Glu-139 together coordinate Mg(2+). Residues 146–148, 186–191, and Lys-222 contribute to the CTP site; these read DIE and KTKPTQ. Residues 186-191 and Lys-222 contribute to the UTP site; that span reads KTKPTQ. One can recognise a Glutamine amidotransferase type-1 domain in the interval 291-541; it reads TIAIVGKYTG…IEAATEQSRL (251 aa). An L-glutamine-binding site is contributed by Gly-353. Cys-380 (nucleophile; for glutamine hydrolysis) is an active-site residue. L-glutamine-binding positions include 381 to 384, Glu-404, and Arg-469; that span reads FGMQ. Residues His-514 and Glu-516 contribute to the active site.

This sequence belongs to the CTP synthase family. In terms of assembly, homotetramer.

The catalysed reaction is UTP + L-glutamine + ATP + H2O = CTP + L-glutamate + ADP + phosphate + 2 H(+). It catalyses the reaction L-glutamine + H2O = L-glutamate + NH4(+). It carries out the reaction UTP + NH4(+) + ATP = CTP + ADP + phosphate + 2 H(+). It functions in the pathway pyrimidine metabolism; CTP biosynthesis via de novo pathway; CTP from UDP: step 2/2. With respect to regulation, allosterically activated by GTP, when glutamine is the substrate; GTP has no effect on the reaction when ammonia is the substrate. The allosteric effector GTP functions by stabilizing the protein conformation that binds the tetrahedral intermediate(s) formed during glutamine hydrolysis. Inhibited by the product CTP, via allosteric rather than competitive inhibition. In terms of biological role, catalyzes the ATP-dependent amination of UTP to CTP with either L-glutamine or ammonia as the source of nitrogen. Regulates intracellular CTP levels through interactions with the four ribonucleotide triphosphates. In Rhizobium leguminosarum bv. trifolii (strain WSM2304), this protein is CTP synthase.